The primary structure comprises 1221 residues: MIDVNKFDSMQIGLASSDKIRSWSYGEVKKPETINYRTLKPEKDGLFDERIFGPTKDWECACGKYKRIRYKGVVCDRCGVEVTRSKVRRERMGHIELAAPVTHIWYFKGIPSRMGLVLDMSPRALEEIIYFASYVVTDAGDTALEKKQLLTEGEYREKREEYGDGFKAAMGAEAIRTLLRDVDLEKECAELKEELREATGQKRTRAVRRLDILEAFLNSGNRPDWMVMDAIPVIPPDLRPMVQLEGGRFATSDLNDLYRRVINRNNRLKRLLDLNAPGIIVQNEKRMLQEAVDALIDNGRRGRPVTGPGNRPLKSLSHMLKGKQGRFRQNLLGKRVDYSGRSVIDVGPKLKLNQMGIPHEMALELFKPFMMRELVKREMASNIKNAKRKIERRDEDIWDVLDDVIKEHPVLLNRAPTLHRLGIQAFEPVLVNGKAMRLHPLACEAYNADFDGDQMAIHVPLSDEAQAEARLLMLAAHHILAPKDGKPIISPSQDMTIGNYYITLEEAGREGEGMVFKDVNEVRTAYQNGYVHLHTRIGLQASSLAKLGTPFTDWQKERILITTAGKAIFNEILPADFPFLNEPTQENLTGMTPDKYFVEPGTDIKEFIKNQPLVGPFKSGFLSDIIAQVYKEYKVTATAELLDRMKDLGYYESTKSGLTVGIADVTVLKEKPEIIEQAHKNVATVAKQFRRGLITDEERYNRVISIWNKAKDDIQAKLVENMDPSNPIQMMSDSGARGNISNFTQLSGMRGLMAAPNGKTMELPVISNFREGLSVLEMFLSSHGARKGMTDTALKTANSGYLTRRLVDVAQDVIIREEDCHTDRGLDVTAITEGNEMIEPLYDRILGRYTMKEVKDPNTGEIIVPANVLVEESEARKIVDAGVQKVTIRSAFTCNTRHGVCERCYGRNLATGDEVEVGEAVGTVAAQSIGEPGTQLTMRNFHQGGVAGGDDITQGLPRVQELFEARNPKGRAVITEVTGVVDTVEENPAERTKEVTVKGETDTRTYSLPFTSVLKVKEGDQVHRGDALTVGSIDPKELIKVRDVLSTENYILREVQKVYRMQGVDISDKHIEIMTRQMLRKVRIMDPGDTDMLPGTLLDISQFKDRNTSAIIEGRIPATARPVLLGITKAALETNSFLSAASFQETTRVLTDAAIRGKNDPLVGLKENVIIGKTIPAGTGMKKYHDIEPEVVNSNVTDGVYSISELEEKINEQQNNVESSN.

Cysteine 60, cysteine 62, cysteine 75, and cysteine 78 together coordinate Zn(2+). Residues aspartate 449, aspartate 451, and aspartate 453 each coordinate Mg(2+). Zn(2+) contacts are provided by cysteine 820, cysteine 894, cysteine 901, and cysteine 904.

Belongs to the RNA polymerase beta' chain family. In terms of assembly, the RNAP catalytic core consists of 2 alpha, 1 beta, 1 beta' and 1 omega subunit. When a sigma factor is associated with the core the holoenzyme is formed, which can initiate transcription. The cofactor is Mg(2+). Requires Zn(2+) as cofactor.

The catalysed reaction is RNA(n) + a ribonucleoside 5'-triphosphate = RNA(n+1) + diphosphate. DNA-dependent RNA polymerase catalyzes the transcription of DNA into RNA using the four ribonucleoside triphosphates as substrates. The protein is DNA-directed RNA polymerase subunit beta' of Ligilactobacillus salivarius (strain UCC118) (Lactobacillus salivarius).